We begin with the raw amino-acid sequence, 420 residues long: Probable protein phosphatase 2C 73 (420 aa).

Residues 33–336 enclose the PPM-type phosphatase domain; it reads GVSMHTKQGW…DDCAVVCLFL (304 aa). Residues Asp-69 and Gly-70 each coordinate Mn(2+). Positions 96–105 are enriched in polar residues; it reads LKTEQDPSSN. The disordered stretch occupies residues 96 to 119; sequence LKTEQDPSSNTDKETLEKSDCTSL. The span at 106-115 shows a compositional bias: basic and acidic residues; it reads TDKETLEKSD. 2 residues coordinate Mn(2+): Asp-281 and Asp-327.

The protein belongs to the PP2C family. Requires Mg(2+) as cofactor. Mn(2+) is required as a cofactor.

The catalysed reaction is O-phospho-L-seryl-[protein] + H2O = L-seryl-[protein] + phosphate. It catalyses the reaction O-phospho-L-threonyl-[protein] + H2O = L-threonyl-[protein] + phosphate. This is Probable protein phosphatase 2C 73 from Oryza sativa subsp. japonica (Rice).